Reading from the N-terminus, the 318-residue chain is Trans-prenyltransferase (318 aa).

Residues 1-21 (MLHLIYISIIVVLIIILISYT) traverse the membrane as a helical segment. Isopentenyl diphosphate contacts are provided by K85, R88, and H122. Residues D129 and D135 each coordinate Mg(2+). Position 140 (R140) interacts with dimethylallyl diphosphate. R141 is an isopentenyl diphosphate binding site. Dimethylallyl diphosphate contacts are provided by K216, T217, and Q254.

The protein belongs to the FPP/GGPP synthase family. Asfivirus trans-prenyltransferase subfamily. The cofactor is Mg(2+).

It localises to the host endoplasmic reticulum. It is found in the host membrane. The enzyme catalyses isopentenyl diphosphate + dimethylallyl diphosphate = (2E)-geranyl diphosphate + diphosphate. The catalysed reaction is isopentenyl diphosphate + (2E)-geranyl diphosphate = (2E,6E)-farnesyl diphosphate + diphosphate. It carries out the reaction isopentenyl diphosphate + (2E,6E)-farnesyl diphosphate = (2E,6E,10E)-geranylgeranyl diphosphate + diphosphate. It catalyses the reaction isopentenyl diphosphate + (2E,6E,10E)-geranylgeranyl diphosphate = (2E,6E,10E,14E)-geranylfarnesyl diphosphate + diphosphate. Its pathway is isoprenoid biosynthesis; farnesyl diphosphate biosynthesis; farnesyl diphosphate from geranyl diphosphate and isopentenyl diphosphate: step 1/1. It functions in the pathway isoprenoid biosynthesis; geranyl diphosphate biosynthesis; geranyl diphosphate from dimethylallyl diphosphate and isopentenyl diphosphate: step 1/1. The protein operates within isoprenoid biosynthesis; geranylgeranyl diphosphate biosynthesis; geranylgeranyl diphosphate from farnesyl diphosphate and isopentenyl diphosphate: step 1/1. In terms of biological role, trans-prenyltransferase that catalyzes the sequential condensation of isopentenyl diphosphate (IPP) with different allylic diphosphates, such as dimethylallyl diphosphate (DMAPP), geranyl diphosphate (GPP), farnesyl diphosphate (FPP) and geranylgeranyl diphosphate (GGPP), farnesyl diphosphate being the best allylic substrate. This is Trans-prenyltransferase from African swine fever virus (strain Badajoz 1971 Vero-adapted) (Ba71V).